We begin with the raw amino-acid sequence, 81 residues long: uncharacterized protein (81 aa).

The transit peptide at 1–20 (MYSRVLSVAAIVTMALAVQA) directs the protein to the mitochondrion. The disordered stretch occupies residues 27–53 (YGNTTNSTGTTNGTNGTNTTTSSTATQ). The segment covering 28 to 53 (GNTTNSTGTTNGTNGTNTTTSSTATQ) has biased composition (low complexity). The chain crosses the membrane as a helical span at residues 59 to 79 (ITNFSSGAFVIAMIAVACSVM).

It is found in the mitochondrion membrane. This is an uncharacterized protein from Schizosaccharomyces pombe (strain 972 / ATCC 24843) (Fission yeast).